The primary structure comprises 549 residues: CTP synthase (549 aa).

The interval 1–267 is amidoligase domain; sequence MTKFVFVTGG…AAQVLSLLNL (267 aa). Ser-13 is a binding site for CTP. Ser-13 provides a ligand contact to UTP. ATP contacts are provided by residues 14–19 and Asp-71; that span reads SIGKGI. 2 residues coordinate Mg(2+): Asp-71 and Glu-141. CTP contacts are provided by residues 148 to 150, 188 to 193, and Lys-224; these read DIE and KTKPTQ. Residues 188-193 and Lys-224 contribute to the UTP site; that span reads KTKPTQ. The Glutamine amidotransferase type-1 domain occupies 292-534; sequence EIAIVGKYVR…VQAARTHSSD (243 aa). Gly-354 lines the L-glutamine pocket. Residue Cys-381 is the Nucleophile; for glutamine hydrolysis of the active site. L-glutamine is bound by residues 382-385, Glu-405, and Arg-462; that span reads LGMQ. Active-site residues include His-507 and Glu-509.

The protein belongs to the CTP synthase family. As to quaternary structure, homotetramer.

The enzyme catalyses UTP + L-glutamine + ATP + H2O = CTP + L-glutamate + ADP + phosphate + 2 H(+). The catalysed reaction is L-glutamine + H2O = L-glutamate + NH4(+). It catalyses the reaction UTP + NH4(+) + ATP = CTP + ADP + phosphate + 2 H(+). It participates in pyrimidine metabolism; CTP biosynthesis via de novo pathway; CTP from UDP: step 2/2. Its activity is regulated as follows. Allosterically activated by GTP, when glutamine is the substrate; GTP has no effect on the reaction when ammonia is the substrate. The allosteric effector GTP functions by stabilizing the protein conformation that binds the tetrahedral intermediate(s) formed during glutamine hydrolysis. Inhibited by the product CTP, via allosteric rather than competitive inhibition. Functionally, catalyzes the ATP-dependent amination of UTP to CTP with either L-glutamine or ammonia as the source of nitrogen. Regulates intracellular CTP levels through interactions with the four ribonucleotide triphosphates. The polypeptide is CTP synthase (Cyanothece sp. (strain PCC 7425 / ATCC 29141)).